Consider the following 1561-residue polypeptide: Rho GTPase-activating protein 190 (1561 aa).

4 FF domains span residues 252-320, 365-419, 426-480, and 482-547; these read YQES…HMKK, YLQN…YLNS, KIGW…HQDD, and IEKS…HLRF. Positions 592–765 constitute a pG1 pseudoGTPase domain; it reads SGSDRTLNLL…EPYPSNHTDL (174 aa). The pG2 pseudoGTPase domain occupies 766–926; sequence RILCCIFCGD…LKTAWDNKYE (161 aa). Ser-973, Ser-975, Ser-985, Ser-988, and Ser-996 each carry phosphoserine. A disordered region spans residues 1054-1074; it reads KIRPKGPSQTLKVGEAPSRNC. One can recognise a Rho-GAP domain in the interval 1349–1552; it reads AQFGKLMITS…TMIDQFPYLF (204 aa).

Negatively regulated by integrin, bsk and Src/Src64B. Its function is as follows. GTPase-activating protein (GAP) for RhoA/Rho1 that plays an essential role in the stability of dorsal branches of mushroom body (MB) neurons. The MB neurons are the center for olfactory learning and memory. Acts by converting RhoA/Rho1 to an inactive GDP-bound state, leading to repress the RhoA/Rho1-Drok-MRLC signaling pathway thereby maintaining axon branch stability. The sequence is that of Rho GTPase-activating protein 190 (RhoGAPp190) from Drosophila melanogaster (Fruit fly).